We begin with the raw amino-acid sequence, 178 residues long: Large ribosomal subunit protein uL6 (178 aa).

Belongs to the universal ribosomal protein uL6 family. In terms of assembly, part of the 50S ribosomal subunit.

Functionally, this protein binds to the 23S rRNA, and is important in its secondary structure. It is located near the subunit interface in the base of the L7/L12 stalk, and near the tRNA binding site of the peptidyltransferase center. This Streptococcus uberis (strain ATCC BAA-854 / 0140J) protein is Large ribosomal subunit protein uL6.